The chain runs to 220 residues: GTP cyclohydrolase 1 (220 aa).

Residues C113, H116, and C184 each contribute to the Zn(2+) site.

Belongs to the GTP cyclohydrolase I family. As to quaternary structure, homomer.

The catalysed reaction is GTP + H2O = 7,8-dihydroneopterin 3'-triphosphate + formate + H(+). It participates in cofactor biosynthesis; 7,8-dihydroneopterin triphosphate biosynthesis; 7,8-dihydroneopterin triphosphate from GTP: step 1/1. This chain is GTP cyclohydrolase 1, found in Hamiltonella defensa subsp. Acyrthosiphon pisum (strain 5AT).